A 172-amino-acid polypeptide reads, in one-letter code: Dual-action ribosomal maturation protein DarP (172 aa).

This sequence belongs to the DarP family.

Its subcellular location is the cytoplasm. Member of a network of 50S ribosomal subunit biogenesis factors which assembles along the 30S-50S interface, preventing incorrect 23S rRNA structures from forming. Promotes peptidyl transferase center (PTC) maturation. This Azotobacter vinelandii (strain DJ / ATCC BAA-1303) protein is Dual-action ribosomal maturation protein DarP.